Here is a 646-residue protein sequence, read N- to C-terminus: Cysteine-rich receptor-like protein kinase 37 (646 aa).

An N-terminal signal peptide occupies residues 1-26 (MGKSCVVTSSFSLLLLFLQTLKYVHA). 2 Gnk2-homologous domains span residues 27 to 132 (GFIC…NHST) and 142 to 252 (TINP…LYPY). The Extracellular segment spans residues 27–287 (GFICYGDFFN…RDEKSFQGSN (261 aa)). Residues asparagine 62, asparagine 129, asparagine 169, and asparagine 180 are each glycosylated (N-linked (GlcNAc...) asparagine). A helical transmembrane segment spans residues 288–308 (IAIIVVPSVINLIIFVVLIFS). The Cytoplasmic portion of the chain corresponds to 309–646 (WKRKQSHTII…LTRPSLSLGH (338 aa)). One can recognise a Protein kinase domain in the interval 345-626 (FSLENKLGQG…LFWLERHATI (282 aa)). ATP contacts are provided by residues 351–359 (LGQGGFGSV) and lysine 373. At tyrosine 418 the chain carries Phosphotyrosine. Residue aspartate 470 is the Proton acceptor of the active site. The residue at position 474 (serine 474) is a Phosphoserine. A Phosphothreonine modification is found at threonine 510. Tyrosine 518 bears the Phosphotyrosine mark.

It belongs to the protein kinase superfamily. Ser/Thr protein kinase family. CRK subfamily.

Its subcellular location is the membrane. The catalysed reaction is L-seryl-[protein] + ATP = O-phospho-L-seryl-[protein] + ADP + H(+). The enzyme catalyses L-threonyl-[protein] + ATP = O-phospho-L-threonyl-[protein] + ADP + H(+). In Arabidopsis thaliana (Mouse-ear cress), this protein is Cysteine-rich receptor-like protein kinase 37 (CRK37).